Consider the following 65-residue polypeptide: Small ribosomal subunit protein bS21 (65 aa).

The protein belongs to the bacterial ribosomal protein bS21 family.

This chain is Small ribosomal subunit protein bS21, found in Cytophaga hutchinsonii (strain ATCC 33406 / DSM 1761 / CIP 103989 / NBRC 15051 / NCIMB 9469 / D465).